Reading from the N-terminus, the 400-residue chain is Nicotinate phosphoribosyltransferase (400 aa).

H220 carries the post-translational modification Phosphohistidine; by autocatalysis.

The protein belongs to the NAPRTase family. Transiently phosphorylated on a His residue during the reaction cycle. Phosphorylation strongly increases the affinity for substrates and increases the rate of nicotinate D-ribonucleotide production. Dephosphorylation regenerates the low-affinity form of the enzyme, leading to product release.

It carries out the reaction nicotinate + 5-phospho-alpha-D-ribose 1-diphosphate + ATP + H2O = nicotinate beta-D-ribonucleotide + ADP + phosphate + diphosphate. The protein operates within cofactor biosynthesis; NAD(+) biosynthesis; nicotinate D-ribonucleotide from nicotinate: step 1/1. Functionally, catalyzes the synthesis of beta-nicotinate D-ribonucleotide from nicotinate and 5-phospho-D-ribose 1-phosphate at the expense of ATP. This is Nicotinate phosphoribosyltransferase from Salmonella heidelberg (strain SL476).